We begin with the raw amino-acid sequence, 316 residues long: Annexin A13 (316 aa).

A lipid anchor (N-myristoyl glycine) is attached at G2. Annexin repeat units follow at residues 14-85 (FDVD…ALLD), 86-157 (RPSE…SLLQ), 169-241 (DLAG…TLVR), and 245-316 (DCED…ALLH).

It belongs to the annexin family. In terms of assembly, monomer and homodimer. In terms of tissue distribution, detected in epithelial cells in colon and jejunum (at protein level). Detected in epithelial cells in jejunum.

It localises to the apical cell membrane. The protein resides in the cell membrane. It is found in the cytoplasmic vesicle. Its function is as follows. Binds to membranes enriched in phosphatidylserine or phosphatidylglycerol in a calcium-dependent manner. Half-maximal membrane binding requires about 60 uM calcium. Does not bind to membranes that lack phospholipids with an acidic headgroup. Binds to membranes enriched in phosphatidylserine or phosphatidylglycerol in a calcium-dependent manner, but requires higher calcium levels for membrane binding than isoform A. Half-maximal membrane binding requires about 320 uM calcium. This is Annexin A13 (ANXA13) from Homo sapiens (Human).